The sequence spans 275 residues: Urease accessory protein UreD (275 aa).

The protein belongs to the UreD family. As to quaternary structure, ureD, UreF and UreG form a complex that acts as a GTP-hydrolysis-dependent molecular chaperone, activating the urease apoprotein by helping to assemble the nickel containing metallocenter of UreC. The UreE protein probably delivers the nickel.

The protein resides in the cytoplasm. In terms of biological role, required for maturation of urease via the functional incorporation of the urease nickel metallocenter. This is Urease accessory protein UreD from Cereibacter sphaeroides (strain ATCC 17029 / ATH 2.4.9) (Rhodobacter sphaeroides).